Here is a 384-residue protein sequence, read N- to C-terminus: tRNA-specific 2-thiouridylase MnmA (384 aa).

Residues Gly-13 to Ser-20 and Met-39 contribute to the ATP site. Residues Asn-99 to Asp-101 form an interaction with target base in tRNA region. The active-site Nucleophile is the Cys-104. Cys-104 and Cys-215 are disulfide-bonded. Gly-128 serves as a coordination point for ATP. The segment at Lys-165–Gln-167 is interaction with tRNA. Cys-215 (cysteine persulfide intermediate) is an active-site residue. The interaction with tRNA stretch occupies residues Arg-333–Tyr-334.

The protein belongs to the MnmA/TRMU family.

Its subcellular location is the cytoplasm. It carries out the reaction S-sulfanyl-L-cysteinyl-[protein] + uridine(34) in tRNA + AH2 + ATP = 2-thiouridine(34) in tRNA + L-cysteinyl-[protein] + A + AMP + diphosphate + H(+). In terms of biological role, catalyzes the 2-thiolation of uridine at the wobble position (U34) of tRNA, leading to the formation of s(2)U34. The sequence is that of tRNA-specific 2-thiouridylase MnmA from Albidiferax ferrireducens (strain ATCC BAA-621 / DSM 15236 / T118) (Rhodoferax ferrireducens).